A 378-amino-acid polypeptide reads, in one-letter code: L-asparaginase-like protein GF11609 (378 aa).

The N-terminal stretch at 1–21 (MCSPLPLLILRLLLLTHPSLG) is a signal peptide. Cystine bridges form between C71–C76, C170–C186, and C325–C352.

This sequence belongs to the Ntn-hydrolase family.

In Drosophila ananassae (Fruit fly), this protein is L-asparaginase-like protein GF11609.